Reading from the N-terminus, the 277-residue chain is Small ribosomal subunit protein uS2 (277 aa).

The tract at residues 255-277 (AVATTDEASAPSAAATETTTEEG) is disordered. Low complexity predominate over residues 257 to 277 (ATTDEASAPSAAATETTTEEG).

This sequence belongs to the universal ribosomal protein uS2 family.

The polypeptide is Small ribosomal subunit protein uS2 (Mycobacteroides abscessus (strain ATCC 19977 / DSM 44196 / CCUG 20993 / CIP 104536 / JCM 13569 / NCTC 13031 / TMC 1543 / L948) (Mycobacterium abscessus)).